The sequence spans 119 residues: Large ribosomal subunit protein bL19 (119 aa).

The protein belongs to the bacterial ribosomal protein bL19 family.

Functionally, this protein is located at the 30S-50S ribosomal subunit interface and may play a role in the structure and function of the aminoacyl-tRNA binding site. This Pseudoalteromonas atlantica (strain T6c / ATCC BAA-1087) protein is Large ribosomal subunit protein bL19.